The following is a 317-amino-acid chain: R-spondin-3 (317 aa).

The N-terminal stretch at 1-20 is a signal peptide; the sequence is MQLQLISIVLILHFMEYTNC. 3 FU repeats span residues 34-86, 92-135, and 139-183; these read SGVS…GFYG, RNDC…GLVP, and KKEC…EFEP. Disulfide bonds link Cys-41/Cys-48, Cys-45/Cys-54, Cys-57/Cys-76, Cys-80/Cys-95, Cys-98/Cys-105, Cys-102/Cys-111, Cys-114/Cys-125, Cys-129/Cys-189, Cys-195/Cys-237, Cys-206/Cys-213, and Cys-246/Cys-253. Asn-184 carries N-linked (GlcNAc...) asparagine glycosylation. Residues 194 to 254 form the TSP type-1 domain; the sequence is HCEVSEWSEW…ECFVKKKRCK (61 aa). A compositionally biased stretch (basic residues) spans 251–268; sequence KRCKPPKGQRRGEKKKRF. The disordered stretch occupies residues 251–317; it reads KRCKPPKGQR…RDQSRDAGTV (67 aa). Residues 274 to 303 are compositionally biased toward basic and acidic residues; sequence VTAEARRERKREREKETIDREESENRNKTE. The N-linked (GlcNAc...) asparagine glycan is linked to Asn-300.

It belongs to the R-spondin family. In terms of assembly, binds heparin.

It localises to the secreted. Activator of the canonical Wnt signaling pathway by acting as a ligand for lgr4-6 receptors, which acts as a key regulator of angiogenesis. Upon binding to lgr4-6 (lgr4, lgr5 or lgr6), lgr4-6 associate with phosphorylated lrp6 and frizzled receptors that are activated by extracellular Wnt receptors, triggering the canonical Wnt signaling pathway to increase expression of target genes. Acts both in the canonical. Wnt/beta-catenin-dependent pathway and in non-canonical Wnt signaling pathway. Acts as a key regulator of angiogenesis by controlling vascular stability and pruning: acts by activating the non-canonical Wnt signaling pathway in endothelial cells. Can also amplify Wnt signaling pathway independently of LGR4-6 receptors, possibly by acting as a direct antagonistic ligand to RNF43 and ZNRF3. This is R-spondin-3 (rspo3) from Danio rerio (Zebrafish).